The primary structure comprises 239 residues: MMEWRDEGALLSVRRHGESSAIIEVFTAAHGRHAGVVRGGASRKIAPILQPGAQLDLTWKARLDEHMGAFTVEPLRSRTALLGDRLGLAGLNAICAMLHVTLPEREPHSTLWQESMALLDALDRPGWPPAYLRWEMRLLEETGFGLDLTRCAVTGSREDLAFVSPKTGRAVSRGAAGGWADRLFPLPLALLGQGPASAEEVRQGLAITGHFLGRELAPLLNGRPMPEARARLMELLARA.

It belongs to the RecO family.

Involved in DNA repair and RecF pathway recombination. The sequence is that of DNA repair protein RecO from Cereibacter sphaeroides (strain KD131 / KCTC 12085) (Rhodobacter sphaeroides).